The primary structure comprises 512 residues: Kynurenine 3-monooxygenase (512 aa).

It belongs to the aromatic-ring hydroxylase family. KMO subfamily. Requires FAD as cofactor.

The protein localises to the mitochondrion outer membrane. It carries out the reaction L-kynurenine + NADPH + O2 + H(+) = 3-hydroxy-L-kynurenine + NADP(+) + H2O. The protein operates within cofactor biosynthesis; NAD(+) biosynthesis; quinolinate from L-kynurenine: step 1/3. Its function is as follows. Catalyzes the hydroxylation of L-kynurenine (L-Kyn) to form 3-hydroxy-L-kynurenine (L-3OHKyn). Required for synthesis of quinolinic acid. In Neurospora crassa (strain ATCC 24698 / 74-OR23-1A / CBS 708.71 / DSM 1257 / FGSC 987), this protein is Kynurenine 3-monooxygenase (nic-3).